The sequence spans 443 residues: Porin D (443 aa).

An N-terminal signal peptide occupies residues 1 to 23 (MKVMKWSAIALAVSAGSTQFAVA). Active-site residues include histidine 179, aspartate 231, and serine 319.

This sequence belongs to the outer membrane porin (Opr) (TC 1.B.25) family.

The protein resides in the cell outer membrane. In terms of biological role, porin with a specificity for basic amino acids. Involved in facilitated diffusion of carbapenem beta-lactam antibiotics, such as imipenem and meropenem. Also possesses serine protease activity. The polypeptide is Porin D (oprD) (Pseudomonas aeruginosa (strain ATCC 15692 / DSM 22644 / CIP 104116 / JCM 14847 / LMG 12228 / 1C / PRS 101 / PAO1)).